The sequence spans 366 residues: Galactoside alpha-(1,2)-fucosyltransferase 1 (366 aa).

The Cytoplasmic segment spans residues 1 to 8; it reads MWPRSHRH. Residues 9-25 traverse the membrane as a helical; Signal-anchor for type II membrane protein segment; it reads LCLAFLLVCVLSAISFL. The Lumenal segment spans residues 26-366; the sequence is IHFHQDSIRH…LSPLWPLAEP (341 aa). Residues Asn66, Asn302, and Asn328 are each glycosylated (N-linked (GlcNAc...) asparagine).

The protein belongs to the glycosyltransferase 11 family.

The protein localises to the golgi apparatus. The protein resides in the golgi stack membrane. The enzyme catalyses a beta-D-galactosyl-(1-&gt;4)-N-acetyl-beta-D-glucosaminyl derivative + GDP-beta-L-fucose = an alpha-L-Fuc-(1-&gt;2)-beta-D-Gal-(1-&gt;4)-beta-D-GlcNAc derivative + GDP + H(+). It catalyses the reaction a ganglioside GA1 + GDP-beta-L-fucose = a ganglioside Fuc-GA1 + GDP + H(+). It carries out the reaction a beta-D-Gal-(1-&gt;3)-beta-D-GlcNAc-(1-&gt;3)-beta-D-Gal-(1-&gt;4)-beta-D-Glc-(1&lt;-&gt;1')-Cer(d18:1(4E)) + GDP-beta-L-fucose = alpha-L-fucosyl-(1-&gt;2)- beta-D-galactosyl-(1-&gt;3)-N-acetyl-beta-D-glucosaminyl-(1-&gt;3)-beta-D-galactosyl-(1-&gt;4)-beta-D-glucosyl-(1&lt;-&gt;1')-N-acylsphing-4-enine + GDP + H(+). The catalysed reaction is a neolactoside nLc4Cer(d18:1(4E)) + GDP-beta-L-fucose = a neolactoside IV(2)-alpha-Fuc-nLc4Cer(d18:1(4E)) + GDP + H(+). The enzyme catalyses a ganglioside GM1 + GDP-beta-L-fucose = a ganglioside Fuc-GM1 + GDP + H(+). It catalyses the reaction beta-D-galactosyl-(1-&gt;3)-N-acetyl-D-galactosamine + GDP-beta-L-fucose = alpha-L-fucosyl-(1-&gt;2)-beta-D-galactosyl-(1-&gt;3)-N-acetyl-D-galactosamine + GDP + H(+). The protein operates within protein modification; protein glycosylation. In terms of biological role, catalyzes the transfer of L-fucose, from a guanosine diphosphate-beta-L-fucose, to the terminal galactose residue of glycoconjugates through an alpha(1,2) linkage leading to H antigen synthesis that is an intermediate substrate in the synthesis of ABO blood group antigens. H antigen is essential for maturation of the glomerular layer of the main olfactory bulb, in cell migration and early cell-cell contacts during tumor associated angiogenesis. Preferentially fucosylates soluble lactose and to a lesser extent fucosylates glycolipids gangliosides GA1 and GM1a. The protein is Galactoside alpha-(1,2)-fucosyltransferase 1 of Saimiri sciureus (Common squirrel monkey).